A 520-amino-acid polypeptide reads, in one-letter code: Cytochrome P450 monooxygenase TRI4 (520 aa).

The helical transmembrane segment at 10–30 (LVNIPISHAVGVVAASTVIYF) threads the bilayer. N-linked (GlcNAc...) asparagine glycosylation is present at asparagine 447. Position 455 (cysteine 455) interacts with heme.

It belongs to the cytochrome P450 family. Heme is required as a cofactor.

The protein resides in the membrane. Its pathway is sesquiterpene biosynthesis; trichothecene biosynthesis. In terms of biological role, cytochrome P450 monooxygenase; part of the core gene cluster that mediates the biosynthesis of trichothecenes, a very large family of chemically related bicyclic sesquiterpene compounds acting as mycotoxins, including T2-toxin. The biosynthesis of trichothecenes begins with the cyclization of farnesyl diphosphate to trichodiene and is catalyzed by the trichodiene synthase TRI5. Trichodiene undergoes a series of oxygenations catalyzed by the cytochrome P450 monooxygenase TRI4. TRI4 controls the addition of four oxygens at C-2, C-3, C-11, and the C-12, C-13-epoxide to form the intermediate isotrichotriol. Isotrichotriol then undergoes a non-enzymatic isomerization and cyclization to form isotrichodermol. During this process, the oxygen at the C-2 position becomes the pyran ring oxygen and the hydroxyl group at C-11 is lost. More complex type A trichothecenes are built by modifying isotrichodermol through a series of paired hydroxylation and acetylation or acylation steps. Isotrichodermol is converted to isotrichodermin by the acetyltransferase TRI101. TRI101 encodes a C-3 transacetylase that acts as a self-protection or resistance factor during biosynthesis and that the presence of a free C-3 hydroxyl group is a key component of Fusarium trichothecene phytotoxicity. A second hydroxyl group is added to C-15 by the trichothecene C-15 hydroxylase TRI11, producing 15-decalonectrin, which is then acetylated by TRI3, producing calonectrin. A third hydroxyl group is added at C-4 by the cytochrome P450 monooxygenase TRI13, converting calonectrin to 3,15-diacetoxyspirpenol, which is subsequently acetylated by the acetyltransferase TRI7. A fourth hydroxyl group is added to C-8 by the cytochrome P450 monooxygenase TRI1, followed by the addition of an isovaleryl moiety by TRI16. Finally, the acetyl group is removed from the C-3 position by the trichothecene C-3 esterase TRI8 to produce T-2 toxin. The polypeptide is Cytochrome P450 monooxygenase TRI4 (Fusarium sporotrichioides).